The following is a 202-amino-acid chain: Imidazoleglycerol-phosphate dehydratase (202 aa).

Belongs to the imidazoleglycerol-phosphate dehydratase family.

The protein resides in the cytoplasm. The catalysed reaction is D-erythro-1-(imidazol-4-yl)glycerol 3-phosphate = 3-(imidazol-4-yl)-2-oxopropyl phosphate + H2O. It functions in the pathway amino-acid biosynthesis; L-histidine biosynthesis; L-histidine from 5-phospho-alpha-D-ribose 1-diphosphate: step 6/9. This chain is Imidazoleglycerol-phosphate dehydratase, found in Salinibacter ruber (strain DSM 13855 / M31).